A 271-amino-acid chain; its full sequence is Intercellular adhesion molecule 4 (271 aa).

Residues 1–22 (MGSLFPLSLLFFLAAAYPGVGS) form the signal peptide. The Extracellular portion of the chain corresponds to 23 to 240 (ALGRRTKRAQ…MLAWSPAPTA (218 aa)). 2 consecutive Ig-like C2-type domains span residues 62-124 (GKSV…TRWA) and 146-217 (GRKY…LNLD). N68, N78, N190, and N223 each carry an N-linked (GlcNAc...) asparagine glycan. Cystine bridges form between C69/C113, C69/C117, C73/C117, and C153/C210. Residues 241–261 (LASGSIAALVGILLTVGAAYL) traverse the membrane as a helical segment. The Cytoplasmic portion of the chain corresponds to 262–271 (CKCLAMKSQA).

It belongs to the immunoglobulin superfamily. ICAM family. Post-translationally, N- and O-glycosylated. As to expression, erythrocytes.

It localises to the cell membrane. The protein resides in the secreted. Its function is as follows. ICAM proteins are ligands for the leukocyte adhesion protein LFA-1 (integrin alpha-L/beta-2). ICAM4 is also a ligand for alpha-4/beta-1 and alpha-V integrins. In Homo sapiens (Human), this protein is Intercellular adhesion molecule 4 (ICAM4).